The primary structure comprises 438 residues: Plasmalemma vesicle-associated protein (438 aa).

Over 1-26 (MGLSMDRSPYSRTGDRDRGCWYYLRY) the chain is Cytoplasmic. Residues 27–47 (FFLFVSLIQFLIILGLVLFMI) form a helical; Signal-anchor for type II membrane protein membrane-spanning segment. Topologically, residues 48 to 438 (YGNVHATTES…LVNPAVPPSG (391 aa)) are extracellular. 4 N-linked (GlcNAc...) asparagine glycosylation sites follow: asparagine 82, asparagine 88, asparagine 112, and asparagine 150. Residues 289 to 383 (AGIERVTREN…TEVDVRISAL (95 aa)) are a coiled coil. Positions 393-438 (PAIQPRLPGPPPNPPPIDPASLEEFKKRILESQRPPLVNPAVPPSG) are disordered. 2 stretches are compositionally biased toward pro residues: residues 399–410 (LPGPPPNPPPID) and 429–438 (LVNPAVPPSG).

In terms of assembly, homodimer. Expressed in lung (alveolar endothelial and bronchial epithelial cells), kidney (endothelium of peritubular capillaries), spleen, liver, adrenal (endothelial cells of the zona reticularis of the cortex and chromaffin cells in the medulla), pancreas (islets of Langerhans), testis (germ cells, interstitial cells in neonatal testis and spermatids), ovary (stromal endothelial, thecal layer of developing follicles, luteal cells within the corpus luteum), intestine (endothelium of capillaries of the intestinal villi) and pituitary (pituicyte cells in the neural lobe) (at protein level). Expressed in lung, kidney, spleen, liver, adrenal, testis, heart, muscle, pituitary, thyroid and ovary.

The protein resides in the cell membrane. The protein localises to the membrane. Its subcellular location is the caveola. It localises to the cytoplasm. It is found in the perinuclear region. Endothelial cell-specific membrane protein involved in the formation of the diaphragms that bridge endothelial fenestrae. It is also required for the formation of stomata of caveolae and transendothelial channels. Functions in microvascular permeability, endothelial fenestrae contributing to the passage of water and solutes and regulating transcellular versus paracellular flow in different organs. Plays a specific role in embryonic development. The chain is Plasmalemma vesicle-associated protein (Plvap) from Rattus norvegicus (Rat).